Consider the following 347-residue polypeptide: DNA polymerase III subunit delta (347 aa).

Belongs to the DNA polymerase HolA subunit family. In terms of assembly, component of the DNA clamp loading complex consisting of tau(3):delta(1):delta'(1). The DNA polymerase III holoenzyme complex contains at least 10 different subunits organized into 3 functionally essential subassemblies: the Pol III core, the beta sliding clamp processivity factor and the clamp-loading complex. The Pol III core (subunits alpha, epsilon and theta) contains the polymerase and the 3'-5' exonuclease proofreading activities. The polymerase is tethered to the template via the dimeric beta sliding clamp processivity factor. The DNA clamp-loading complex assembles the beta sliding clamp onto the primed template and plays a central role in the organization and communication at the replication fork.

Its subcellular location is the cytoplasm. The protein resides in the nucleoid. It carries out the reaction DNA(n) + a 2'-deoxyribonucleoside 5'-triphosphate = DNA(n+1) + diphosphate. Part of the beta sliding clamp loading complex, which hydrolyzes ATP to load the beta clamp onto primed DNA to form the DNA replication pre-initiation complex. DNA polymerase III is a complex, multichain enzyme responsible for most of the replicative synthesis in bacteria. This DNA polymerase also exhibits 3'-5' exonuclease activity. The delta subunit is the wrench that will open the beta subunit dimer. The DNA clamp loading complex (tau(3),delta,delta') is thought to load beta dimers onto DNA by binding ATP which alters the complex's conformation so it can bind beta sliding clamp dimers and open them at one interface. Primed DNA is recognized, ATP is hydrolyzed releasing the clamp loading complex and closing the beta sliding clamp ring around the primed DNA. This chain is DNA polymerase III subunit delta, found in Bacillus subtilis (strain 168).